Reading from the N-terminus, the 246-residue chain is Dihydroorotate dehydrogenase B (NAD(+)), electron transfer subunit (246 aa).

The FAD-binding FR-type domain maps to 3–97 (EKYTVEKVYE…TGPLGNGFNV (95 aa)). Residues 50 to 53 (RPIS) and 72 to 73 (GT) each bind FAD. [2Fe-2S] cluster-binding residues include cysteine 211, cysteine 216, cysteine 219, and cysteine 231.

This sequence belongs to the PyrK family. As to quaternary structure, heterotetramer of 2 PyrK and 2 PyrD type B subunits. The cofactor is [2Fe-2S] cluster. FAD is required as a cofactor.

It participates in pyrimidine metabolism; UMP biosynthesis via de novo pathway; orotate from (S)-dihydroorotate (NAD(+) route): step 1/1. Functionally, responsible for channeling the electrons from the oxidation of dihydroorotate from the FMN redox center in the PyrD type B subunit to the ultimate electron acceptor NAD(+). The protein is Dihydroorotate dehydrogenase B (NAD(+)), electron transfer subunit of Clostridium acetobutylicum (strain ATCC 824 / DSM 792 / JCM 1419 / IAM 19013 / LMG 5710 / NBRC 13948 / NRRL B-527 / VKM B-1787 / 2291 / W).